A 61-amino-acid polypeptide reads, in one-letter code: Large ribosomal subunit protein uL30 (61 aa).

Belongs to the universal ribosomal protein uL30 family. In terms of assembly, part of the 50S ribosomal subunit.

The polypeptide is Large ribosomal subunit protein uL30 (Maricaulis maris (strain MCS10) (Caulobacter maris)).